We begin with the raw amino-acid sequence, 599 residues long: MSMRSEYCGLVTEELLGQSVSLCGWVSRRRDHGGVIFIDLRDREGLVQVVCDPDRAEMFKAAEGVRNEFCLQIKGVVRARPEGTTNAALKSGKIEVLCHELIVLNPSITPPFQLDDDNLSETTRLTHRVLDLRRPQMQHNLRLRYRVAIEVRKYLDAQGFIDIETPMLTKSTPEGARDYLVPSRTNPGQFFALPQSPQLFKQLLMVANFDRYYQIVKCFRDEDLRADRQPEFTQIDCETSFLSEQEIRDLFEAMIRHVFKETIGVTLDEKFPVMLYSEAMRRFGSDKPDLRVKLEFTDLTDAVRDVDFKVFSTPANTKDGRVAAIRVPKGGELSRGDIDSYTEFVRIYGAKGLAWIKVNEVAKGRDGLQSPIVKNLHDEAVKAIIERTGAQDGDIIFFAADRAKVVNDSLGALRLKIGHSEFGKANGLVESGWKPLWVIDFPMFEYDEEDNRYVAAHHPFTSPKDEHLEYLETDPARCLAKAYDMVLNGWEIGGGSVRIHREEVQSKVFRALKINAEEAQAKFGFLLDALQYGAPPHGGIAFGLDRIVTMMAGADSIRDVIAFPKTQRAQCLLTQAPSEVDERQLRELHIRLRQPEPKA.

Glu-174 contacts L-aspartate. Residues 198-201 (QLFK) are aspartate. Arg-220 serves as a coordination point for L-aspartate. ATP-binding positions include 220–222 (RDE) and Gln-229. His-457 is an L-aspartate binding site. Glu-491 is an ATP binding site. Arg-498 is a binding site for L-aspartate. 543–546 (GLDR) contributes to the ATP binding site.

This sequence belongs to the class-II aminoacyl-tRNA synthetase family. Type 1 subfamily. As to quaternary structure, homodimer.

It localises to the cytoplasm. It catalyses the reaction tRNA(Asx) + L-aspartate + ATP = L-aspartyl-tRNA(Asx) + AMP + diphosphate. In terms of biological role, aspartyl-tRNA synthetase with relaxed tRNA specificity since it is able to aspartylate not only its cognate tRNA(Asp) but also tRNA(Asn). Reaction proceeds in two steps: L-aspartate is first activated by ATP to form Asp-AMP and then transferred to the acceptor end of tRNA(Asp/Asn). The chain is Aspartate--tRNA(Asp/Asn) ligase from Paraburkholderia xenovorans (strain LB400).